The following is a 589-amino-acid chain: Probable methyltransferase PMT23 (589 aa).

Topologically, residues 1-4 are cytoplasmic; that stretch reads MAIS. The chain crosses the membrane as a helical; Signal-anchor for type II membrane protein span at residues 5-25; sequence VQHVVVLLLSTLLIAITFFLF. The Lumenal portion of the chain corresponds to 26–589; it reads TSDNARFPFP…FWRPAKPELR (564 aa). N-linked (GlcNAc...) asparagine glycosylation is found at Asn70, Asn375, and Asn442.

This sequence belongs to the methyltransferase superfamily.

The protein resides in the golgi apparatus membrane. The protein is Probable methyltransferase PMT23 of Arabidopsis thaliana (Mouse-ear cress).